A 240-amino-acid chain; its full sequence is Zinc import ATP-binding protein ZnuC (240 aa).

One can recognise an ABC transporter domain in the interval 1 to 219 (MSLLSIAALD…PAYRAMFGLD (219 aa)). 36–43 (GPNGSGKT) serves as a coordination point for ATP.

It belongs to the ABC transporter superfamily. Zinc importer (TC 3.A.1.15.5) family. In terms of assembly, the complex is composed of two ATP-binding proteins (ZnuC), two transmembrane proteins (ZnuB) and a solute-binding protein (ZnuA).

The protein localises to the cell inner membrane. The enzyme catalyses Zn(2+)(out) + ATP(in) + H2O(in) = Zn(2+)(in) + ADP(in) + phosphate(in) + H(+)(in). Functionally, part of the ABC transporter complex ZnuABC involved in zinc import. Responsible for energy coupling to the transport system. This chain is Zinc import ATP-binding protein ZnuC, found in Chromohalobacter salexigens (strain ATCC BAA-138 / DSM 3043 / CIP 106854 / NCIMB 13768 / 1H11).